Here is a 228-residue protein sequence, read N- to C-terminus: UPF0173 metal-dependent hydrolase BLi03080/BL00413 (228 aa).

This sequence belongs to the UPF0173 family.

The polypeptide is UPF0173 metal-dependent hydrolase BLi03080/BL00413 (Bacillus licheniformis (strain ATCC 14580 / DSM 13 / JCM 2505 / CCUG 7422 / NBRC 12200 / NCIMB 9375 / NCTC 10341 / NRRL NRS-1264 / Gibson 46)).